The following is a 1134-amino-acid chain: Mediator of RNA polymerase II transcription subunit 12 (1134 aa).

The protein belongs to the Mediator complex subunit 12 family. In terms of assembly, component of the srb8-11 complex which consists of rb8, srb9(TRAP240), srb10 and srb11. The srb8-11 complex associates with the Mediator complex thereby blocking association with RNA polymerase II and leading to reduced transcriptional activation by Mediator.

Its subcellular location is the nucleus. Its function is as follows. Component of the srb8-11 complex. The srb8-11 complex is a regulatory module of the Mediator complex which is itself involved in regulation of basal and activated RNA polymerase II-dependent transcription. The srb8-11 complex may be involved in the transcriptional repression of a subset of genes regulated by Mediator. It may inhibit the association of the Mediator complex with RNA polymerase II to form the holoenzyme complex. This Schizosaccharomyces pombe (strain 972 / ATCC 24843) (Fission yeast) protein is Mediator of RNA polymerase II transcription subunit 12 (srb8).